Reading from the N-terminus, the 415-residue chain is Actin-like protein 7B (415 aa).

The tract at residues 1-31 (MATRNSPMPLGTAQGDPGEAGTRPGPDASLR) is disordered. A Phosphoserine modification is found at serine 6.

The protein belongs to the actin family. As to expression, detected only in the testis and, to a lesser extent, in the prostate.

It is found in the cytoplasm. It localises to the cytoskeleton. The chain is Actin-like protein 7B (ACTL7B) from Homo sapiens (Human).